The primary structure comprises 211 residues: Proteasome subunit beta 1 (211 aa).

Positions 1 to 17 (MVIMGNELQLENKILKG) are cleaved as a propeptide — removed in mature form; by autocatalysis. The active-site Nucleophile is Thr-18.

This sequence belongs to the peptidase T1B family. The 20S proteasome core is composed of 14 alpha and 14 beta subunits that assemble into four stacked heptameric rings, resulting in a barrel-shaped structure. The two inner rings, each composed of seven catalytic beta subunits, are sandwiched by two outer rings, each composed of seven alpha subunits. The catalytic chamber with the active sites is on the inside of the barrel. Has a gated structure, the ends of the cylinder being occluded by the N-termini of the alpha-subunits. Is capped at one or both ends by the proteasome regulatory ATPase, PAN.

It localises to the cytoplasm. The enzyme catalyses Cleavage of peptide bonds with very broad specificity.. Its activity is regulated as follows. The formation of the proteasomal ATPase PAN-20S proteasome complex, via the docking of the C-termini of PAN into the intersubunit pockets in the alpha-rings, triggers opening of the gate for substrate entry. Interconversion between the open-gate and close-gate conformations leads to a dynamic regulation of the 20S proteasome proteolysis activity. Component of the proteasome core, a large protease complex with broad specificity involved in protein degradation. The sequence is that of Proteasome subunit beta 1 from Saccharolobus islandicus (strain M.16.27) (Sulfolobus islandicus).